The primary structure comprises 156 residues: MSRKNQAPKREVLPDPLYNSKIVTRLINRVMLDGKRGTAATIVYDAFEAIKEATGTDALEVFETAMENIMPVLEVRARRVGGSNYQVPVEVRPERRTTLGLRWLVNASRARGEHTMKDRLAKEIMDAANNTGASVKKREDTHKMAEANRAFAHFRW.

This sequence belongs to the universal ribosomal protein uS7 family. Part of the 30S ribosomal subunit. Contacts proteins S9 and S11.

Functionally, one of the primary rRNA binding proteins, it binds directly to 16S rRNA where it nucleates assembly of the head domain of the 30S subunit. Is located at the subunit interface close to the decoding center, probably blocks exit of the E-site tRNA. The sequence is that of Small ribosomal subunit protein uS7 from Streptococcus agalactiae serotype Ia (strain ATCC 27591 / A909 / CDC SS700).